Consider the following 513-residue polypeptide: GMP synthase [glutamine-hydrolyzing] (513 aa).

In terms of domain architecture, Glutamine amidotransferase type-1 spans 5 to 196 (QILILDFGSQ…LYDIAKCNKD (192 aa)). Cysteine 83 serves as the catalytic Nucleophile. Active-site residues include histidine 170 and glutamate 172. Positions 197 to 388 (WNLDDFIDQQ…LGLPEEMINR (192 aa)) constitute a GMPS ATP-PPase domain. An ATP-binding site is contributed by 224-230 (SGGVDSS).

In terms of assembly, homodimer.

It carries out the reaction XMP + L-glutamine + ATP + H2O = GMP + L-glutamate + AMP + diphosphate + 2 H(+). Its pathway is purine metabolism; GMP biosynthesis; GMP from XMP (L-Gln route): step 1/1. In terms of biological role, catalyzes the synthesis of GMP from XMP. This is GMP synthase [glutamine-hydrolyzing] from Mesoplasma florum (strain ATCC 33453 / NBRC 100688 / NCTC 11704 / L1) (Acholeplasma florum).